A 75-amino-acid polypeptide reads, in one-letter code: Brevinin-2ISc (75 aa).

Positions M1–C22 are cleaved as a signal peptide. Positions E23–V40 are cleaved as a propeptide — removed in mature form. C69 and C75 are oxidised to a cystine.

As to expression, expressed by the skin glands.

It is found in the secreted. Its function is as follows. Has antimicrobial activity against Gram-negative bacterium E.coli ATCC 8739 (MIC=50 ug) and against Gram positive bacteria S.aureus ATCC 6538 (MIC=25 ug). Has no activity against methicillin-resistant S.aureus ATCC 43300, B.subtilis ATCC 6633 and against fungus C.albicans ATCC 90028. This chain is Brevinin-2ISc, found in Odorrana ishikawae (Ishikawa's frog).